Consider the following 232-residue polypeptide: Putative uridine kinase DAS2 (232 aa).

17–24 is a binding site for ATP; sequence GGHATGVG.

It belongs to the uridine kinase family.

It localises to the cytoplasm. Its subcellular location is the nucleus. The enzyme catalyses uridine + ATP = UMP + ADP + H(+). It carries out the reaction cytidine + ATP = CMP + ADP + H(+). The protein operates within pyrimidine metabolism; CTP biosynthesis via salvage pathway; CTP from cytidine: step 1/3. It participates in pyrimidine metabolism; UMP biosynthesis via salvage pathway; UMP from uridine: step 1/1. Its function is as follows. Putative uridine kinase identified in a screen for mutants with increased levels of rDNA transcription. This is Putative uridine kinase DAS2 (DAS2) from Saccharomyces cerevisiae (strain ATCC 204508 / S288c) (Baker's yeast).